We begin with the raw amino-acid sequence, 82 residues long: Lysis inhibition accessory protein (82 aa).

The protein belongs to the T4likevirus lysis inhibition accessory protein rIII family. In terms of assembly, homooligomer. Interacts with holin (via N-terminus).

Functionally, probably binds to the cytoplasmic part of the holin during lysis inhibition and stabilizes the holin-antiholin complex thereby resulting in a robust block of the hole formation. The polypeptide is Lysis inhibition accessory protein (rIII) (Escherichia coli (Bacteriophage T4)).